A 368-amino-acid chain; its full sequence is Flavanone 3-dioxygenase (368 aa).

The region spanning 191–295 is the Fe2OG dioxygenase domain; sequence CVDMDQKVIV…RMSIATFQNP (105 aa). Residues H218, D220, and H276 each coordinate Fe cation. R286 contributes to the 2-oxoglutarate binding site.

This sequence belongs to the iron/ascorbate-dependent oxidoreductase family. Fe(2+) serves as cofactor. The cofactor is L-ascorbate.

It carries out the reaction a (2S)-flavan-4-one + 2-oxoglutarate + O2 = a (2R,3R)-dihydroflavonol + succinate + CO2. The protein operates within secondary metabolite biosynthesis; flavonoid biosynthesis. In terms of biological role, involved in the conversion of (2S)-naringenin to (+)-(2R/3R)-dihydrokaempferol. The chain is Flavanone 3-dioxygenase (FHT) from Petroselinum crispum (Parsley).